A 426-amino-acid polypeptide reads, in one-letter code: MALASDPPKAGFRLSMLIYDTRFRSITIQIVVLLLFLAGLVWLLNNAYVNLEAKGKDFNFSFLWTRAGYDLAQTLIPYSNDDTHFRALIEGLLNTLLVSVLGCILATILGTIIGVLRLSQNWLVARIMTVYVETFRNIPLLLWILLMGTILAETRPVPKDFRLTEAMKAAGEEPKASMWFFDSVAVTNRGTNLPAPAFDHSLGVVDLGWNLPVSLNALAILAVMSASFWGWRRFMARAKAVQEATGTRPTTWWPSLLILFAPISALLYGLGFHLDYPQITKFDFTGGFQMLHSFTALLIALTLYTAAFIAEIVRAGIQAISRGQTEAAYALGLRPGRTMSLVILPQALRVIVPPLISQFLNLTKNSSLAIAVSYMDLRGTLGGITLNQTGRELECMLLMMLIYLTISLTISSLMNLYNKSIKLKER.

Helical transmembrane passes span 25 to 45 (SITIQIVVLLLFLAGLVWLLN), 96 to 116 (LLVSVLGCILATILGTIIGVL), 132 to 152 (VETFRNIPLLLWILLMGTILA), 211 to 231 (LPVSLNALAILAVMSASFWGW), 252 to 272 (WWPSLLILFAPISALLYGLGF), 293 to 313 (SFTALLIALTLYTAAFIAEIV), 340 to 360 (SLVILPQALRVIVPPLISQFL), and 396 to 416 (MLLMMLIYLTISLTISSLMNL). Residues 92–414 (LLNTLLVSVL…TISLTISSLM (323 aa)) form the ABC transmembrane type-1 domain.

Belongs to the binding-protein-dependent transport system permease family. HisMQ subfamily. In terms of assembly, bztB and BztC form a heterodimer which can form a membrane complex with a homodimer of BztD.

It localises to the cell inner membrane. Part of a binding-protein-dependent transport system for glutamate, glutamine, aspartate and asparagine. Probably responsible for the translocation of the substrate across the membrane. This chain is Glutamate/glutamine/aspartate/asparagine transport system permease protein BztB (bztB), found in Rhodobacter capsulatus (strain ATCC BAA-309 / NBRC 16581 / SB1003).